The chain runs to 121 residues: Large ribosomal subunit protein bL20 (121 aa).

The protein belongs to the bacterial ribosomal protein bL20 family.

In terms of biological role, binds directly to 23S ribosomal RNA and is necessary for the in vitro assembly process of the 50S ribosomal subunit. It is not involved in the protein synthesizing functions of that subunit. This chain is Large ribosomal subunit protein bL20, found in Koribacter versatilis (strain Ellin345).